We begin with the raw amino-acid sequence, 643 residues long: Phosphomethylpyrimidine synthase (643 aa).

Substrate contacts are provided by residues Asn-248, Met-277, Tyr-306, His-342, 362–364 (SRG), 403–406 (DGLR), and Glu-442. His-446 is a Zn(2+) binding site. Position 469 (Tyr-469) interacts with substrate. His-510 serves as a coordination point for Zn(2+). [4Fe-4S] cluster-binding residues include Cys-590, Cys-593, and Cys-598.

It belongs to the ThiC family. In terms of assembly, homodimer. The cofactor is [4Fe-4S] cluster.

The enzyme catalyses 5-amino-1-(5-phospho-beta-D-ribosyl)imidazole + S-adenosyl-L-methionine = 4-amino-2-methyl-5-(phosphooxymethyl)pyrimidine + CO + 5'-deoxyadenosine + formate + L-methionine + 3 H(+). Its pathway is cofactor biosynthesis; thiamine diphosphate biosynthesis. Its function is as follows. Catalyzes the synthesis of the hydroxymethylpyrimidine phosphate (HMP-P) moiety of thiamine from aminoimidazole ribotide (AIR) in a radical S-adenosyl-L-methionine (SAM)-dependent reaction. In Burkholderia ambifaria (strain MC40-6), this protein is Phosphomethylpyrimidine synthase.